Here is a 496-residue protein sequence, read N- to C-terminus: Cytochrome P450 3A56 (496 aa).

Cysteine 441 is a heme binding site.

This sequence belongs to the cytochrome P450 family. Heme serves as cofactor. In terms of tissue distribution, highly expressed in liver and intestine. Moderate expression in gill and spleen. Low expression in kidney, brain and heart.

The protein localises to the endoplasmic reticulum membrane. Its subcellular location is the microsome membrane. It carries out the reaction an organic molecule + reduced [NADPH--hemoprotein reductase] + O2 = an alcohol + oxidized [NADPH--hemoprotein reductase] + H2O + H(+). Putative steroid 6-beta-hydroxylase. The polypeptide is Cytochrome P450 3A56 (cyp3a56) (Fundulus heteroclitus (Killifish)).